Consider the following 266-residue polypeptide: Small ribosomal subunit protein eS1 (266 aa).

Positions Asp237 to Val266 are disordered.

This sequence belongs to the eukaryotic ribosomal protein eS1 family. In terms of assembly, component of the small ribosomal subunit. Mature ribosomes consist of a small (40S) and a large (60S) subunit. The 40S subunit contains about 33 different proteins and 1 molecule of RNA (18S). The 60S subunit contains about 49 different proteins and 3 molecules of RNA (28S, 5.8S and 5S).

It is found in the cytoplasm. The protein is Small ribosomal subunit protein eS1 of Lysiphlebus testaceipes (Greenbugs aphid parastoid).